Consider the following 167-residue polypeptide: uncharacterized protein (167 aa).

The segment at 148–167 (NKESRGENDGGEERESANIY) is disordered.

This is an uncharacterized protein from Homo sapiens (Human).